The primary structure comprises 502 residues: Cytochrome P450 monooxygenase pyr9 (502 aa).

A helical transmembrane segment spans residues 5-25 (EDASIGTVWVTCLLAVGLYFI). N-linked (GlcNAc...) asparagine glycosylation is found at Asn-205, Asn-291, and Asn-372. Cys-437 is a heme binding site.

It belongs to the cytochrome P450 family. The cofactor is heme.

The protein localises to the membrane. The protein operates within secondary metabolite biosynthesis; terpenoid biosynthesis. In terms of biological role, cytochrome P450 monooxygenase; part of the gene cluster that mediates the biosynthesis of pyripyropene A, a specific human acyl-coenzyme A:cholesterol acyltransferase 2 inhibitor. The first step of the pathway is the synthesis of nicotinyl-CoA from nicotinic acid by the nicotinic acid-CoA ligase pyr1. Nicotinyl-CoA is then a substrate of polyketide synthase pyr2 to produce 4-hydroxy-6-(3-pyridinyl)-2H-pyran-2-one (HPPO) which is further prenylated by the polyprenyl transferase pyr6 to yield farnesyl-HPPO. The next steps consist of an epoxidation of farnesyl-HPPO to epoxyfarnesyl-HPPO by FAD-dependent monooxygenase pyr5 and a cyclization of the terpenoid portion by the terpene cyclase pyr4 to yield deacetyl-pyripyropene E. The 2 cytochrome P450 monooxygenases pyr3 and pyr9, and the 2 acetyltransferases pyr7 and pyr8 are involved in the conversion of deacetyl-pyripyropene E into pyripyropene A through several cycles of oxidation and acetylation steps. Pyr7 acetylates deacetyl-pyripyropene E to pyripyropene E which is oxidized to 11-deacetyl-pyripyropene O by pyr3, which is in turn acetylated into pyripyropene O by pyr8. Pyripyropene O is then oxidized to deacetyl-pyripyropene A by pyr9. Deacetyl-pyripyropene A is finally acetylated to pyripyropene A by pyr8. This chain is Cytochrome P450 monooxygenase pyr9, found in Aspergillus fumigatus (strain ATCC MYA-4609 / CBS 101355 / FGSC A1100 / Af293) (Neosartorya fumigata).